The following is a 292-amino-acid chain: Lipoyl synthase (292 aa).

[4Fe-4S] cluster is bound by residues cysteine 34, cysteine 39, cysteine 45, cysteine 60, cysteine 64, cysteine 67, and serine 273. Residues 46–262 (WNKKHATVMI…KYVAYSKGFL (217 aa)) enclose the Radical SAM core domain.

It belongs to the radical SAM superfamily. Lipoyl synthase family. Requires [4Fe-4S] cluster as cofactor.

It is found in the cytoplasm. It catalyses the reaction [[Fe-S] cluster scaffold protein carrying a second [4Fe-4S](2+) cluster] + N(6)-octanoyl-L-lysyl-[protein] + 2 oxidized [2Fe-2S]-[ferredoxin] + 2 S-adenosyl-L-methionine + 4 H(+) = [[Fe-S] cluster scaffold protein] + N(6)-[(R)-dihydrolipoyl]-L-lysyl-[protein] + 4 Fe(3+) + 2 hydrogen sulfide + 2 5'-deoxyadenosine + 2 L-methionine + 2 reduced [2Fe-2S]-[ferredoxin]. It participates in protein modification; protein lipoylation via endogenous pathway; protein N(6)-(lipoyl)lysine from octanoyl-[acyl-carrier-protein]: step 2/2. Functionally, catalyzes the radical-mediated insertion of two sulfur atoms into the C-6 and C-8 positions of the octanoyl moiety bound to the lipoyl domains of lipoate-dependent enzymes, thereby converting the octanoylated domains into lipoylated derivatives. The polypeptide is Lipoyl synthase (Ehrlichia ruminantium (strain Welgevonden)).